The primary structure comprises 253 residues: DNA repair protein RecO (253 aa).

This sequence belongs to the RecO family.

Functionally, involved in DNA repair and RecF pathway recombination. This Nitrobacter hamburgensis (strain DSM 10229 / NCIMB 13809 / X14) protein is DNA repair protein RecO.